A 956-amino-acid polypeptide reads, in one-letter code: MEVTCLLLLALIPFHCRGQGVYAPAQAQIVHAGQACVVKEDNISERVYTIRESDTLVLQCLVTGHPRPQVRWTKTAGSASDKFQETSVFNETLRIERIARTQGGRYYCKAENGVGVPAIKSIRVDVQYLDEPVLTVHQTVSDVRGNFYQEKTVFLRCTVSSNPPARFIWKRGSDTLSHSQDNGVDIYEPLYTQGETKVLKLKNLRPQDYASYTCQVSVRNVCGIPDKAITFQLTNTTAPPALKLSVNETLVVNPGENVTVQCLLTGGDPLPQLHWSHGPGPLPLGALAQGGTLSIPSVQARDSGYYNCTATNNVGNPAKKTVNLLVRSLKNATFQITPDMIKESENIQLGQDLKLSCHVDAVPQEKVNYQWFKNGKPARTSKRLLVTRNDPELPAVTSSLELIDLHFSDYGTYLCMASFPGSPVPDLSIEVNISSETVPPTISVPKGRAVVTVREGSPAELQCEVRGKPRPPVLWSRVDKEAALLPSGLALEETPDGKLRLESVSRDMSGTYRCQTARYNGFNVRPREAQVQLTVHFPPEVEPSSQDVRQALGRPVLLRCSLLRGSPQRIASAVWRFKGQLLPPPPVLPAAAVETPDHAELRLDALTRDSSGNYECSVSNDVGSATCLFQVSAKAYSPEFYFDTPNPTRSHKLSKNYSYVLQWTQREPDAVDPVLNYRLSIRQLNQHNAMVKAIPVRRVEKGQLLEYILTDLRVPHSYEIRLTPYTTFGAGDMASRIIHYTEPINLPSLSDNTCHFEDEKICGYTQDLTDNFDWTRQNALTQNPKRSPNTGPPTDISGTPEGYYMFIETSRPRELGDRARLVSPLYNASAKFYCVSFFYHMYGKHIGSLNLLVRSRNKGTLDTHAWSLSGNKGNVWQQAHVPINPSGPFQIIFEGVRGSGYLGDIAIDDVTLKKGECPRRQMDPNKVVVMPGSGAPRLSSLQLWGSMAIFLLALQR.

The first 18 residues, 1–18 (MEVTCLLLLALIPFHCRG), serve as a signal peptide directing secretion. 2 consecutive Ig-like domains span residues 24-123 (PAQA…KSIR) and 132-230 (PVLT…KAIT). An N-linked (GlcNAc...) asparagine glycan is attached at Asn-42. 2 disulfides stabilise this stretch: Cys-60-Cys-108 and Cys-157-Cys-214. Residues Asn-235, Asn-247, Asn-257, and Asn-307 are each glycosylated (N-linked (GlcNAc...) asparagine). Ig-like domains lie at 240 to 323 (PALK…KTVN), 338 to 432 (PDMI…IEVN), 440 to 532 (PTIS…AQVQ), and 539 to 650 (PEVE…PTRS). 2 disulfides stabilise this stretch: Cys-262/Cys-308 and Cys-357/Cys-415. N-linked (GlcNAc...) asparagine glycosylation occurs at Asn-432. 2 cysteine pairs are disulfide-bonded: Cys-463–Cys-514 and Cys-560–Cys-616. The 118-residue stretch at 627-744 (CLFQVSAKAY…SRIIHYTEPI (118 aa)) folds into the Fibronectin type-III domain. The MAM domain occupies 752 to 919 (NTCHFEDEKI…VTLKKGECPR (168 aa)). Residues 780–789 (LTQNPKRSPN) are compositionally biased toward polar residues. The disordered stretch occupies residues 780 to 799 (LTQNPKRSPNTGPPTDISGT). Ser-933 carries GPI-anchor amidated serine lipidation. Residues 934 to 956 (GAPRLSSLQLWGSMAIFLLALQR) constitute a propeptide, removed in mature form.

Interacts heterophilically through its MAM domain with proteins in axon-rich regions and through its Ig-like domains with proteins in differentiating muscle. Interacts (through the Ig-like domains) with NLGN2. As to expression, expressed by neurons in layers 2 and 3 of the cortex during their migration and settling in the cortical plate. Also found in layers 4 and 6a. From 9.5 dpc-13.5 dpc, detected in the marginal zone of the developing cortex. At 16.5 dpc, modest expression is found in the intermediate zone. At postnatal day 1, evident in the superficial cortical plate. By postnatal day 7, expression is limited to layers 2 and 3 throughout most of the cortex.

It is found in the cell membrane. Required for radial migration of cortical neurons in the superficial layer of the neocortex. Plays a role in the formation or maintenance of inhibitory synapses. May function by inhibiting the activity of NLGN2. The polypeptide is MAM domain-containing glycosylphosphatidylinositol anchor protein 1 (Mus musculus (Mouse)).